Consider the following 327-residue polypeptide: MDDRGPDVAPAVVTTADEIAAMEIRGAATIADAAAEALAIQAERSDAERPDAFERQLRAAAKTLYETRPTAVSLPNALRYVLAGMDGETVAELRASTIARAEEFQRDLAQAQSKLGSVGANRLRDGDVVMTHCHSTDALACLEAAVEDGTEIEAIVKETRPRLQGHITARQLREWDVPVTVIVDGAARRYLDQADHVLVGADSIAADGSVINKIGTSGLAVIARERGVPVTVAAQTIKLHPDTMTGHTVEIERRDEREVLDDDERAAITDTADGADDGLTVENPAFDVTPPRYVDAIVTEHGQFPPETVVTLMRELFGETVDEPWEL.

Residues 25–28 (RGAA) and arginine 68 contribute to the substrate site. The active-site Proton acceptor is the cysteine 133. Aspartate 202 functions as the Proton donor in the catalytic mechanism. Substrate is bound by residues 212–213 (NK) and lysine 238.

The protein belongs to the eIF-2B alpha/beta/delta subunits family. R15P isomerase subfamily.

The catalysed reaction is alpha-D-ribose 1,5-bisphosphate = D-ribulose 1,5-bisphosphate. Its function is as follows. Isomerase involved in the non-carboxylating pentose bisphosphate pathway, a nucleoside degradation pathway present in some halophilic archaea. Catalyzes the isomerization of ribose 1,5-bisphosphate (R15P) to ribulose 1,5-bisphosphate (RuBP). The sequence is that of Ribose 1,5-bisphosphate isomerase from Haloterrigena turkmenica (strain ATCC 51198 / DSM 5511 / JCM 9101 / NCIMB 13204 / VKM B-1734 / 4k) (Halococcus turkmenicus).